The chain runs to 347 residues: 5-deoxyribose 1-phosphate isomerase (347 aa).

Substrate is bound by residues 48 to 50 (RGA), Arg91, and Gln198. Asp239 serves as the catalytic Proton donor. 249 to 250 (NK) lines the substrate pocket.

It belongs to the EIF-2B alpha/beta/delta subunits family. DrdI subfamily.

The catalysed reaction is 5-deoxy-alpha-D-ribose 1-phosphate = 5-deoxy-D-ribulose 1-phosphate. It functions in the pathway carbohydrate degradation. Functionally, catalyzes the isomerization of 5-deoxy-alpha-D-ribose 1-phosphate to 5-deoxy-D-ribulose 1-phosphate, as part of a 5-deoxyribose salvage pathway that recycles this toxic radical SAM enzyme by-product to mainstream metabolites. This Bacillus thuringiensis subsp. konkukian (strain 97-27) protein is 5-deoxyribose 1-phosphate isomerase.